The primary structure comprises 161 residues: 2-C-methyl-D-erythritol 2,4-cyclodiphosphate synthase (161 aa).

A divalent metal cation-binding residues include Asp-10 and His-12. 4-CDP-2-C-methyl-D-erythritol 2-phosphate contacts are provided by residues 10-12 and 36-37; these read DVH and HS. His-44 contacts a divalent metal cation. 4-CDP-2-C-methyl-D-erythritol 2-phosphate contacts are provided by residues 58-60, 63-67, 102-108, 134-137, Phe-141, and Arg-144; these read DIG, FPDTD, AQAPKMA, and TTTE.

The protein belongs to the IspF family. As to quaternary structure, homotrimer. Requires a divalent metal cation as cofactor.

It carries out the reaction 4-CDP-2-C-methyl-D-erythritol 2-phosphate = 2-C-methyl-D-erythritol 2,4-cyclic diphosphate + CMP. Its pathway is isoprenoid biosynthesis; isopentenyl diphosphate biosynthesis via DXP pathway; isopentenyl diphosphate from 1-deoxy-D-xylulose 5-phosphate: step 4/6. Functionally, involved in the biosynthesis of isopentenyl diphosphate (IPP) and dimethylallyl diphosphate (DMAPP), two major building blocks of isoprenoid compounds. Catalyzes the conversion of 4-diphosphocytidyl-2-C-methyl-D-erythritol 2-phosphate (CDP-ME2P) to 2-C-methyl-D-erythritol 2,4-cyclodiphosphate (ME-CPP) with a corresponding release of cytidine 5-monophosphate (CMP). The sequence is that of 2-C-methyl-D-erythritol 2,4-cyclodiphosphate synthase from Shewanella baltica (strain OS155 / ATCC BAA-1091).